The sequence spans 269 residues: Probable cytochrome c oxidase subunit 2 (269 aa).

Helical transmembrane passes span 8–28 (ITLI…PLPW), 50–70 (LLYI…FVCI), and 87–107 (ILIE…IAVP). Residues histidine 189, cysteine 224, cysteine 228, and histidine 232 each contribute to the Cu cation site.

It belongs to the cytochrome c oxidase subunit 2 family. Cu cation serves as cofactor. Requires heme as cofactor.

Its subcellular location is the cell membrane. The catalysed reaction is 4 Fe(II)-[cytochrome c] + O2 + 8 H(+)(in) = 4 Fe(III)-[cytochrome c] + 2 H2O + 4 H(+)(out). In terms of biological role, subunits I and II form the functional core of the enzyme complex. Electrons originating in cytochrome c are transferred via heme a and Cu(A) to the binuclear center formed by heme a3 and Cu(B). The polypeptide is Probable cytochrome c oxidase subunit 2 (ctaC) (Rickettsia bellii (strain RML369-C)).